We begin with the raw amino-acid sequence, 91 residues long: Small ribosomal subunit protein uS19 (91 aa).

The protein belongs to the universal ribosomal protein uS19 family.

In terms of biological role, protein S19 forms a complex with S13 that binds strongly to the 16S ribosomal RNA. This is Small ribosomal subunit protein uS19 from Aliarcobacter butzleri (strain RM4018) (Arcobacter butzleri).